A 540-amino-acid polypeptide reads, in one-letter code: MTASSKTPASSSGPSPHAASAHDKILIVDFGSQVTQLIARRIREEGVYSEIVPFQKAEAAFLEMKPKAVILSGGPASVLDKDAPAAPMSILKAGVPVLGICYGEQTMAQQLGGTVEAGHHREFGRAAIEVTDTCALFEGVWEKGGHYNVWMSHGDRVTKLPDGFRAVAKAQGSPIAVIADDARRFYAMQFHPEVVHTPDGAKLLRNFVRKVAGLTGDWTMRAFREEAIEKIRAQVGKGRVICGLSGGVDSSVAAILIHEAIGEQLTCVFVDHGMLRKDEGKTVVELFRHHYNIPLVHVDASKQFLGELAGVTDPEMKRKTIGRLFIDVFEAEAKKIAALGKGSAEFLAQGTLYPDVIESVSFTGGPSVTIKSHHNVGGLPDRMNMKLVEPLRELFKDEVRALGRELGLPEIFVGRHPFPGPGLAIRCPGEITREKLDILREADAVYIDQIRKAGLYDKIWQAFAVLLPVKTVGVMGDGRTYEYVVGLRAVTSTDGMTADFYAFDATFLGATATSIINEVKGVNRVVYDVTSKPPGTIEWE.

Residues 24–217 form the Glutamine amidotransferase type-1 domain; that stretch reads KILIVDFGSQ…VRKVAGLTGD (194 aa). Cys101 (nucleophile) is an active-site residue. Catalysis depends on residues His191 and Glu193. One can recognise a GMPS ATP-PPase domain in the interval 218–415; the sequence is WTMRAFREEA…LGLPEIFVGR (198 aa). Residue 245-251 participates in ATP binding; it reads SGGVDSS.

Homodimer.

It carries out the reaction XMP + L-glutamine + ATP + H2O = GMP + L-glutamate + AMP + diphosphate + 2 H(+). It participates in purine metabolism; GMP biosynthesis; GMP from XMP (L-Gln route): step 1/1. Catalyzes the synthesis of GMP from XMP. The chain is GMP synthase [glutamine-hydrolyzing] from Nitrobacter hamburgensis (strain DSM 10229 / NCIMB 13809 / X14).